The chain runs to 192 residues: Pyridoxal 5'-phosphate synthase subunit PdxT (192 aa).

46–48 (GES) contacts L-glutamine. Cys-77 acts as the Nucleophile in catalysis. L-glutamine-binding positions include Arg-103 and 131–132 (IR). Residues His-167 and Glu-169 each act as charge relay system in the active site.

This sequence belongs to the glutaminase PdxT/SNO family. As to quaternary structure, in the presence of PdxS, forms a dodecamer of heterodimers. Only shows activity in the heterodimer.

The enzyme catalyses aldehydo-D-ribose 5-phosphate + D-glyceraldehyde 3-phosphate + L-glutamine = pyridoxal 5'-phosphate + L-glutamate + phosphate + 3 H2O + H(+). It carries out the reaction L-glutamine + H2O = L-glutamate + NH4(+). Its pathway is cofactor biosynthesis; pyridoxal 5'-phosphate biosynthesis. Its function is as follows. Catalyzes the hydrolysis of glutamine to glutamate and ammonia as part of the biosynthesis of pyridoxal 5'-phosphate. The resulting ammonia molecule is channeled to the active site of PdxS. This Exiguobacterium sibiricum (strain DSM 17290 / CCUG 55495 / CIP 109462 / JCM 13490 / 255-15) protein is Pyridoxal 5'-phosphate synthase subunit PdxT.